A 491-amino-acid chain; its full sequence is Ketol-acid reductoisomerase (NADP(+)) (491 aa).

One can recognise a KARI N-terminal Rossmann domain in the interval 15–208; that stretch reads AQLGKCRFMA…GGHRAGVLES (194 aa). NADP(+)-binding positions include 45-48, arginine 68, arginine 76, serine 78, and 108-110; these read CGAQ and DKQ. Residue histidine 132 is part of the active site. Residue glycine 158 coordinates NADP(+). KARI C-terminal knotted domains lie at 209–344 and 345–484; these read SFVA…TAPQ and YEGK…MTDM. Mg(2+) contacts are provided by aspartate 217, glutamate 221, glutamate 389, and glutamate 393. Serine 414 contacts substrate.

This sequence belongs to the ketol-acid reductoisomerase family. The cofactor is Mg(2+).

The enzyme catalyses (2R)-2,3-dihydroxy-3-methylbutanoate + NADP(+) = (2S)-2-acetolactate + NADPH + H(+). The catalysed reaction is (2R,3R)-2,3-dihydroxy-3-methylpentanoate + NADP(+) = (S)-2-ethyl-2-hydroxy-3-oxobutanoate + NADPH + H(+). It functions in the pathway amino-acid biosynthesis; L-isoleucine biosynthesis; L-isoleucine from 2-oxobutanoate: step 2/4. It participates in amino-acid biosynthesis; L-valine biosynthesis; L-valine from pyruvate: step 2/4. Its function is as follows. Involved in the biosynthesis of branched-chain amino acids (BCAA). Catalyzes an alkyl-migration followed by a ketol-acid reduction of (S)-2-acetolactate (S2AL) to yield (R)-2,3-dihydroxy-isovalerate. In the isomerase reaction, S2AL is rearranged via a Mg-dependent methyl migration to produce 3-hydroxy-3-methyl-2-ketobutyrate (HMKB). In the reductase reaction, this 2-ketoacid undergoes a metal-dependent reduction by NADPH to yield (R)-2,3-dihydroxy-isovalerate. The sequence is that of Ketol-acid reductoisomerase (NADP(+)) from Klebsiella pneumoniae subsp. pneumoniae (strain ATCC 700721 / MGH 78578).